Reading from the N-terminus, the 218-residue chain is Large ribosomal subunit protein bL25 (218 aa).

A disordered region spans residues 186–218 (AVEEEVPAEDEEIMPEPEVIGEEDEGDEEEPEE).

It belongs to the bacterial ribosomal protein bL25 family. CTC subfamily. As to quaternary structure, part of the 50S ribosomal subunit; part of the 5S rRNA/L5/L18/L25 subcomplex. Contacts the 5S rRNA. Binds to the 5S rRNA independently of L5 and L18.

This is one of the proteins that binds to the 5S RNA in the ribosome where it forms part of the central protuberance. The polypeptide is Large ribosomal subunit protein bL25 (Halothermothrix orenii (strain H 168 / OCM 544 / DSM 9562)).